A 427-amino-acid chain; its full sequence is A-adding tRNA nucleotidyltransferase (427 aa).

Residue 49–52 (GTVR) participates in ATP binding. Positions 62 and 64 each coordinate Mg(2+). ATP contacts are provided by residues 136–137 (RD), Asn141, 181–190 (DPTRLLRGVR), Arg194, and Arg225.

It belongs to the tRNA nucleotidyltransferase/poly(A) polymerase family. Mg(2+) serves as cofactor.

It catalyses the reaction a tRNA with a 3' CC end + ATP = a tRNA with a 3' CCA end + diphosphate. Functionally, tRNA nucleotidyltransferase involved in the synthesis of the tRNA CCA terminus. Adds the terminal adenosine residue to tRNA. The polypeptide is A-adding tRNA nucleotidyltransferase (Halalkalibacterium halodurans (strain ATCC BAA-125 / DSM 18197 / FERM 7344 / JCM 9153 / C-125) (Bacillus halodurans)).